Reading from the N-terminus, the 315-residue chain is Homoserine O-succinyltransferase (315 aa).

The active-site Acyl-thioester intermediate is the Cys-142. Residues Lys-163 and Ser-192 each coordinate substrate. Residue His-235 is the Proton acceptor of the active site. Glu-237 is a catalytic residue. Arg-249 contributes to the substrate binding site. The span at 249–258 (RDCEKSDNAP) shows a compositional bias: basic and acidic residues. The disordered stretch occupies residues 249–271 (RDCEKSDNAPKPENYFPDDDATK).

This sequence belongs to the MetA family.

It is found in the cytoplasm. It carries out the reaction L-homoserine + succinyl-CoA = O-succinyl-L-homoserine + CoA. It participates in amino-acid biosynthesis; L-methionine biosynthesis via de novo pathway; O-succinyl-L-homoserine from L-homoserine: step 1/1. Functionally, transfers a succinyl group from succinyl-CoA to L-homoserine, forming succinyl-L-homoserine. This chain is Homoserine O-succinyltransferase, found in Pseudoalteromonas translucida (strain TAC 125).